A 154-amino-acid chain; its full sequence is uncharacterized protein (154 aa).

Its subcellular location is the mitochondrion. This is an uncharacterized protein from Vicia faba (Broad bean).